Reading from the N-terminus, the 314-residue chain is Homoserine kinase (314 aa).

95–105 (PHSRGLGSSAA) is an ATP binding site.

This sequence belongs to the GHMP kinase family. Homoserine kinase subfamily.

Its subcellular location is the cytoplasm. It carries out the reaction L-homoserine + ATP = O-phospho-L-homoserine + ADP + H(+). Its pathway is amino-acid biosynthesis; L-threonine biosynthesis; L-threonine from L-aspartate: step 4/5. Functionally, catalyzes the ATP-dependent phosphorylation of L-homoserine to L-homoserine phosphate. The protein is Homoserine kinase of Mycolicibacterium vanbaalenii (strain DSM 7251 / JCM 13017 / BCRC 16820 / KCTC 9966 / NRRL B-24157 / PYR-1) (Mycobacterium vanbaalenii).